A 299-amino-acid polypeptide reads, in one-letter code: Oxygen-dependent coproporphyrinogen-III oxidase (299 aa).

Residue serine 92 participates in substrate binding. Residues histidine 96 and histidine 106 each coordinate a divalent metal cation. Histidine 106 acts as the Proton donor in catalysis. 108 to 110 (NVR) is a binding site for substrate. Residues histidine 145 and histidine 175 each coordinate a divalent metal cation. Positions 240–275 (YVEFNLVWDRGTLFGLQTGGRTESILMSMPPLVRWE) are important for dimerization. 258–260 (GGR) contacts substrate.

The protein belongs to the aerobic coproporphyrinogen-III oxidase family. Homodimer. It depends on a divalent metal cation as a cofactor.

It is found in the cytoplasm. It carries out the reaction coproporphyrinogen III + O2 + 2 H(+) = protoporphyrinogen IX + 2 CO2 + 2 H2O. The protein operates within porphyrin-containing compound metabolism; protoporphyrin-IX biosynthesis; protoporphyrinogen-IX from coproporphyrinogen-III (O2 route): step 1/1. Its function is as follows. Involved in the heme biosynthesis. Catalyzes the aerobic oxidative decarboxylation of propionate groups of rings A and B of coproporphyrinogen-III to yield the vinyl groups in protoporphyrinogen-IX. The protein is Oxygen-dependent coproporphyrinogen-III oxidase of Shigella boydii serotype 18 (strain CDC 3083-94 / BS512).